We begin with the raw amino-acid sequence, 318 residues long: Coproporphyrin III ferrochelatase (318 aa).

Residues H186 and E268 each coordinate Fe(2+).

This sequence belongs to the ferrochelatase family.

It localises to the cytoplasm. It carries out the reaction Fe-coproporphyrin III + 2 H(+) = coproporphyrin III + Fe(2+). It functions in the pathway porphyrin-containing compound metabolism; protoheme biosynthesis. Involved in coproporphyrin-dependent heme b biosynthesis. Catalyzes the insertion of ferrous iron into coproporphyrin III to form Fe-coproporphyrin III. In Lactococcus lactis subsp. cremoris (strain SK11), this protein is Coproporphyrin III ferrochelatase.